Here is a 287-residue protein sequence, read N- to C-terminus: uncharacterized protein (287 aa).

Helical transmembrane passes span 4-24 (TTNG…SLPA), 36-56 (FLTV…LLIF), 66-86 (LISL…LTAL), 93-113 (SAHA…FGVL), 122-142 (VFWI…LIQG), 148-168 (LGDA…AEGA), 179-199 (VISW…FFFT), 208-228 (VPAL…GFVF), 237-259 (GIAA…ASVI), and 264-286 (VGWA…RRFA). EamA domains lie at 16-139 (LIFS…GFAL) and 158-284 (VVCG…AARR).

Belongs to the EamA transporter family.

Its subcellular location is the cell membrane. This is an uncharacterized protein from Bacillus subtilis (strain 168).